Here is a 491-residue protein sequence, read N- to C-terminus: Ran-binding protein 3-like (491 aa).

Positions 270–441 constitute a RanBD1 domain; it reads TFKSVLKFPN…VALRSLAKQG (172 aa). Residues 440–468 are disordered; that stretch reads QGDGGPAESQSDTALPQLNGESCDEDEDE. Positions 447–459 are enriched in polar residues; sequence ESQSDTALPQLNG.

Interacts with SMAD1, SMAD5 and SMAD8.

The protein localises to the nucleus. The protein resides in the cytoplasm. Nuclear export factor for BMP-specific SMAD1/5/8 that plays a critical role in terminating BMP signaling and regulating mesenchymal stem cell differentiation by blocking osteoblast differentiation to promote myogenic differention. Directly recognizes dephosphorylated SMAD1/5/8 and mediates their nuclear export in a Ran-dependent manner. This Mus musculus (Mouse) protein is Ran-binding protein 3-like (Ranbp3l).